The primary structure comprises 259 residues: Pimeloyl-[acyl-carrier protein] methyl ester esterase (259 aa).

Residues Trp-18, 78 to 79 (SL), and 139 to 143 (FLALD) contribute to the substrate site. Ser-78 serves as the catalytic Nucleophile. Residues Asp-203 and His-231 contribute to the active site. His-231 provides a ligand contact to substrate.

It belongs to the AB hydrolase superfamily. Carboxylesterase BioH family. In terms of assembly, monomer.

It is found in the cytoplasm. It catalyses the reaction 6-carboxyhexanoyl-[ACP] methyl ester + H2O = 6-carboxyhexanoyl-[ACP] + methanol + H(+). It functions in the pathway cofactor biosynthesis; biotin biosynthesis. The physiological role of BioH is to remove the methyl group introduced by BioC when the pimeloyl moiety is complete. It allows to synthesize pimeloyl-ACP via the fatty acid synthetic pathway through the hydrolysis of the ester bonds of pimeloyl-ACP esters. The polypeptide is Pimeloyl-[acyl-carrier protein] methyl ester esterase (Stenotrophomonas maltophilia (strain R551-3)).